Reading from the N-terminus, the 248-residue chain is Probable transcriptional regulatory protein blr1534 (248 aa).

Positions Met1–Lys21 are disordered.

This sequence belongs to the TACO1 family.

Its subcellular location is the cytoplasm. The sequence is that of Probable transcriptional regulatory protein blr1534 from Bradyrhizobium diazoefficiens (strain JCM 10833 / BCRC 13528 / IAM 13628 / NBRC 14792 / USDA 110).